We begin with the raw amino-acid sequence, 130 residues long: Small ribosomal subunit protein uS8 (130 aa).

It belongs to the universal ribosomal protein uS8 family. Part of the 30S ribosomal subunit.

Functionally, one of the primary rRNA binding proteins, it binds directly to 16S rRNA central domain where it helps coordinate assembly of the platform of the 30S subunit. In Haloarcula marismortui (strain ATCC 43049 / DSM 3752 / JCM 8966 / VKM B-1809) (Halobacterium marismortui), this protein is Small ribosomal subunit protein uS8.